The sequence spans 347 residues: NADH-ubiquinone oxidoreductase chain 2 (347 aa).

The next 11 membrane-spanning stretches (helical) occupy residues 3 to 23 (PLIFTMILLTVMLGTAIVMTT), 25 to 45 (HWVMAWIGFEMNMLAVIPILM), 59 to 79 (YFLTQATASMLLMLAIVINLV), 96 to 116 (IIMTLALAMKLGLAPFHFWVP), 122 to 142 (VQLSSGLILLTWQKLAPMSIL), 149 to 169 (INLDLLLLMSLLSILVGGWGG), 178 to 198 (IMAYSSIAHMGWMTAIMVYNP), 200 to 220 (MALLNLVIYILLTTTTFMMLM), 240 to 260 (LTTAILTIMLSLGGLPPLSGF), 276 to 296 (MIMPTIMAVMALLNLYFYMRL), and 326 to 346 (LSPLIILSTLILPLSPMLALL).

It belongs to the complex I subunit 2 family. In terms of assembly, core subunit of respiratory chain NADH dehydrogenase (Complex I) which is composed of 45 different subunits. Interacts with TMEM242.

The protein resides in the mitochondrion inner membrane. The enzyme catalyses a ubiquinone + NADH + 5 H(+)(in) = a ubiquinol + NAD(+) + 4 H(+)(out). Its function is as follows. Core subunit of the mitochondrial membrane respiratory chain NADH dehydrogenase (Complex I) which catalyzes electron transfer from NADH through the respiratory chain, using ubiquinone as an electron acceptor. Essential for the catalytic activity and assembly of complex I. This chain is NADH-ubiquinone oxidoreductase chain 2, found in Nyctimene albiventer (Common tube-nosed fruit bat).